Consider the following 233-residue polypeptide: Germin-like protein 3-7 (233 aa).

The first 35 residues, 1-35, serve as a signal peptide directing secretion; the sequence is MSSSSSMECTGNMSAAPLLVLTVAVLAVLASTCAA. Cys-44 and Cys-63 are disulfide-bonded. The region spanning 77 to 225 is the Cupin type-1 domain; that stretch reads AGLAAAGSTD…SFQVDAEIIK (149 aa). The Mn(2+) site is built by His-125, His-127, Glu-132, and His-171. Residue Asn-178 is glycosylated (N-linked (GlcNAc...) asparagine).

The protein belongs to the germin family. Oligomer (believed to be a pentamer but probably hexamer).

The protein localises to the secreted. Its subcellular location is the extracellular space. It localises to the apoplast. Its function is as follows. May play a role in plant defense. Probably has no oxalate oxidase activity even if the active site is conserved. This Oryza sativa subsp. japonica (Rice) protein is Germin-like protein 3-7 (GER7).